Reading from the N-terminus, the 122-residue chain is Large ribosomal subunit protein bL20 (122 aa).

Belongs to the bacterial ribosomal protein bL20 family.

In terms of biological role, binds directly to 23S ribosomal RNA and is necessary for the in vitro assembly process of the 50S ribosomal subunit. It is not involved in the protein synthesizing functions of that subunit. This chain is Large ribosomal subunit protein bL20, found in Saccharopolyspora erythraea (strain ATCC 11635 / DSM 40517 / JCM 4748 / NBRC 13426 / NCIMB 8594 / NRRL 2338).